A 227-amino-acid polypeptide reads, in one-letter code: 7-cyano-7-deazaguanine synthase (227 aa).

7–17 (VSGGMDSLVAT) contributes to the ATP binding site. Positions 187, 195, 198, and 201 each coordinate Zn(2+).

Belongs to the QueC family. Requires Zn(2+) as cofactor.

The catalysed reaction is 7-carboxy-7-deazaguanine + NH4(+) + ATP = 7-cyano-7-deazaguanine + ADP + phosphate + H2O + H(+). It participates in purine metabolism; 7-cyano-7-deazaguanine biosynthesis. Functionally, catalyzes the ATP-dependent conversion of 7-carboxy-7-deazaguanine (CDG) to 7-cyano-7-deazaguanine (preQ(0)). This Chlorobaculum tepidum (strain ATCC 49652 / DSM 12025 / NBRC 103806 / TLS) (Chlorobium tepidum) protein is 7-cyano-7-deazaguanine synthase.